The primary structure comprises 202 residues: dITP/XTP pyrophosphatase (202 aa).

7–12 (SNNPGK) provides a ligand contact to substrate. Residues glutamate 39 and aspartate 68 each contribute to the Mg(2+) site. Aspartate 68 (proton acceptor) is an active-site residue. Residues alanine 69, 157 to 160 (FGFD), lysine 180, and 185 to 186 (HR) contribute to the substrate site.

This sequence belongs to the HAM1 NTPase family. As to quaternary structure, homodimer. Mg(2+) is required as a cofactor.

It carries out the reaction XTP + H2O = XMP + diphosphate + H(+). It catalyses the reaction dITP + H2O = dIMP + diphosphate + H(+). The enzyme catalyses ITP + H2O = IMP + diphosphate + H(+). Pyrophosphatase that catalyzes the hydrolysis of nucleoside triphosphates to their monophosphate derivatives, with a high preference for the non-canonical purine nucleotides XTP (xanthosine triphosphate), dITP (deoxyinosine triphosphate) and ITP. Seems to function as a house-cleaning enzyme that removes non-canonical purine nucleotides from the nucleotide pool, thus preventing their incorporation into DNA/RNA and avoiding chromosomal lesions. The polypeptide is dITP/XTP pyrophosphatase (Polaromonas naphthalenivorans (strain CJ2)).